The chain runs to 600 residues: Methionine--tRNA ligase (600 aa).

The 'HIGH' region motif lies at 11 to 21 (PYANGPRHIGH). Zn(2+) contacts are provided by Cys143, Cys146, Cys156, and Cys159. The 'KMSKS' region motif lies at 351–355 (KFSSS). Residue Ser354 coordinates ATP.

The protein belongs to the class-I aminoacyl-tRNA synthetase family. MetG type 1 subfamily. Monomer. Zn(2+) is required as a cofactor.

The protein resides in the cytoplasm. The catalysed reaction is tRNA(Met) + L-methionine + ATP = L-methionyl-tRNA(Met) + AMP + diphosphate. In terms of biological role, is required not only for elongation of protein synthesis but also for the initiation of all mRNA translation through initiator tRNA(fMet) aminoacylation. The polypeptide is Methionine--tRNA ligase (Salinispora arenicola (strain CNS-205)).